The sequence spans 336 residues: MADTAPQLKRKREQEAEEAETPSTEEKEAGVGNGTSAPVRLPFSGFRVQKVLRESARDKIIFLHGKVNEDSGDTHGEDAVVILEKTPFQVEHVAQLLTGNPELKLQFSNDIYSTYNLFPPRHLSDIKTTVVYPASEKHLQKYMRQDLRLIRETGDDYRSLTLPYLESQSLSIQWVYNILDKKAEADRIVFENPDPSDGFVLIPDLKWNQQQLDDLYLIAICHRRGIRSLRDLTPEHLPLLRNILREGQEAILKRYQVTGDRLRVYLHYLPSYYHLHVHFTALGFEAPGSGVERAHLLAEVIENLECDPKHYQRRTLTFALRTDDPLLQLLQKAQQP.

The interval 1 to 36 is disordered; that stretch reads MADTAPQLKRKREQEAEEAETPSTEEKEAGVGNGTS. N-acetylalanine is present on alanine 2. The nuclear localization signal (NLS) signature appears at 9–12; it reads KRKR. Phosphoserine is present on serine 23. Lysine 137 and lysine 141 each carry N6-acetyllysine. A nuclear export sequence (NES) motif is present at residues 141 to 153; the sequence is KYMRQDLRLIRET. Residues tryptophan 174, glutamate 184, aspartate 204, lysine 206, and 267–278 each bind substrate; that span reads HYLPSYYHLHVH. A Histidine triad motif motif is present at residues 274–278; that stretch reads HLHVH. Residue histidine 276 is the Nucleophile of the active site.

The protein belongs to the HIT family. As to quaternary structure, homodimer. Associates with components of the exosome multienzyme ribonuclease complex, such as EXOSC3 and EXOSC4. Interacts with NDOR1.

It localises to the cytoplasm. It is found in the nucleus. The catalysed reaction is a 5'-end (N(7)-methyl 5'-triphosphoguanosine)-ribonucleoside in mRNA + H2O = N(7)-methyl-GMP + a 5'-end diphospho-ribonucleoside in mRNA + 2 H(+). The hydrolytic product 7-methylguanosine diphosphate (m7GDP) efficiently inhibits the decapping scavenger activity and acts as a competitive inhibitor in vitro. Inhibited by 2,4-diaminoquinazoline. In terms of biological role, decapping scavenger enzyme that catalyzes the cleavage of a residual cap structure following the degradation of mRNAs by the 3'-&gt;5' exosome-mediated mRNA decay pathway. Hydrolyzes cap analog structures like 7-methylguanosine nucleoside triphosphate (m7GpppG) with up to 10 nucleotide substrates (small capped oligoribonucleotides) and specifically releases 5'-phosphorylated RNA fragments and 7-methylguanosine monophosphate (m7GMP). Cleaves cap analog structures like tri-methyl guanosine nucleoside triphosphate (m3(2,2,7)GpppG) with very poor efficiency. Does not hydrolyze unmethylated cap analog (GpppG) and shows no decapping activity on intact m7GpppG-capped mRNA molecules longer than 25 nucleotides. Does not hydrolyze 7-methylguanosine diphosphate (m7GDP) to m7GMP. May also play a role in the 5'-&gt;3 mRNA decay pathway; m7GDP, the downstream product released by the 5'-&gt;3' mRNA mediated decapping activity, may be also converted by DCPS to m7GMP. Binds to m7GpppG and strongly to m7GDP. Plays a role in first intron splicing of pre-mRNAs. Inhibits activation-induced cell death. This chain is m7GpppX diphosphatase (Dcps), found in Rattus norvegicus (Rat).